A 165-amino-acid chain; its full sequence is Large ribosomal subunit protein uL10 (165 aa).

It belongs to the universal ribosomal protein uL10 family. As to quaternary structure, part of the ribosomal stalk of the 50S ribosomal subunit. The N-terminus interacts with L11 and the large rRNA to form the base of the stalk. The C-terminus forms an elongated spine to which L12 dimers bind in a sequential fashion forming a multimeric L10(L12)X complex.

Its function is as follows. Forms part of the ribosomal stalk, playing a central role in the interaction of the ribosome with GTP-bound translation factors. The chain is Large ribosomal subunit protein uL10 from Mycoplasmopsis synoviae (strain 53) (Mycoplasma synoviae).